A 610-amino-acid chain; its full sequence is Replication factor C large subunit (610 aa).

Position 55-62 (55-62 (GPAGIGKT)) interacts with ATP. Basic and acidic residues-rich tracts occupy residues 467–478 (EKEGNASAEKPE), 502–515 (LPEK…KLPE), and 594–603 (DGSKKAEPKN). The disordered stretch occupies residues 467–610 (EKEGNASAEK…PKNQKTLFDF (144 aa)).

This sequence belongs to the activator 1 small subunits family. RfcL subfamily. As to quaternary structure, heteromultimer composed of small subunits (RfcS) and large subunits (RfcL).

Functionally, part of the RFC clamp loader complex which loads the PCNA sliding clamp onto DNA. The sequence is that of Replication factor C large subunit from Methanosarcina mazei (strain ATCC BAA-159 / DSM 3647 / Goe1 / Go1 / JCM 11833 / OCM 88) (Methanosarcina frisia).